Here is a 199-residue protein sequence, read N- to C-terminus: MLSALRTAGALSTRRLASTQAIASNSEAPKGIATTGTPFLNPSSKAEYALARLDDVMNLAQRGSIWPLTFGLACCAVEMMHFAAPRYDMDRYGVVFRASPRQADLIFVAGTVTNKMAPALRRIYDQMPEAKWVISMGSCANGGGYYHYAYSVLRGCDRVIPVDIYVPGCPPTAEALLYGVLQLQKKIKRKREAQLWYRR.

Residues 1-16 constitute a mitochondrion transit peptide; that stretch reads MLSALRTAGALSTRRL. Residues Cys-74, Cys-75, Cys-139, and Cys-169 each contribute to the [4Fe-4S] cluster site.

Belongs to the complex I 20 kDa subunit family. Complex I is composed of 45 different subunits This is a component of the iron-sulfur (IP) fragment of the enzyme. The cofactor is [4Fe-4S] cluster.

It is found in the mitochondrion. It carries out the reaction a ubiquinone + NADH + 5 H(+)(in) = a ubiquinol + NAD(+) + 4 H(+)(out). Core subunit of the mitochondrial membrane respiratory chain NADH dehydrogenase (Complex I) that is believed to belong to the minimal assembly required for catalysis. Complex I functions in the transfer of electrons from NADH to the respiratory chain. The immediate electron acceptor for the enzyme is believed to be ubiquinone. The sequence is that of Probable NADH dehydrogenase [ubiquinone] iron-sulfur protein 7, mitochondrial from Caenorhabditis briggsae.